A 549-amino-acid chain; its full sequence is Chaperonin GroEL 1 (549 aa).

Residues 30–33 (TLGP), lysine 51, 87–91 (DGTTT), glycine 415, 479–481 (NAA), and aspartate 495 each bind ATP.

This sequence belongs to the chaperonin (HSP60) family. As to quaternary structure, forms a cylinder of 14 subunits composed of two heptameric rings stacked back-to-back. Interacts with the co-chaperonin GroES.

It is found in the cytoplasm. The catalysed reaction is ATP + H2O + a folded polypeptide = ADP + phosphate + an unfolded polypeptide.. Functionally, together with its co-chaperonin GroES, plays an essential role in assisting protein folding. The GroEL-GroES system forms a nano-cage that allows encapsulation of the non-native substrate proteins and provides a physical environment optimized to promote and accelerate protein folding. The polypeptide is Chaperonin GroEL 1 (Azoarcus sp. (strain BH72)).